Consider the following 290-residue polypeptide: MDKIIKSIAQSGAFRAYVLDSTETVALAQEKHNTLSSSTVALGRTLIANQILAANQKGDSKITVKVIGDSSFGHIISVADTKGHVKGYIQNTGVDIKKTATGEVLVGPFMGNGHFVTIIDYGTGNPYTSTTPLITGEIGEDFAYYLTESEQTPSAIGLNVLLDENDKVKVAGGFMVQVLPGASEEEIARYEKRLQEMPAISHLLASKNHVDALLEAIYGDEPYKRLSEEPLSFQCDCSRERFEAALMTLPKADLQAMIDEDKGAEIVCQFCGTKYQFNENDLEALINDKA.

Disulfide bonds link cysteine 235–cysteine 237 and cysteine 268–cysteine 271.

It belongs to the HSP33 family. Post-translationally, under oxidizing conditions two disulfide bonds are formed involving the reactive cysteines. Under reducing conditions zinc is bound to the reactive cysteines and the protein is inactive.

It localises to the cytoplasm. Redox regulated molecular chaperone. Protects both thermally unfolding and oxidatively damaged proteins from irreversible aggregation. Plays an important role in the bacterial defense system toward oxidative stress. The chain is 33 kDa chaperonin from Streptococcus pyogenes serotype M28 (strain MGAS6180).